The primary structure comprises 463 residues: ATP synthase subunit beta (463 aa).

151-158 (GGAGVGKT) serves as a coordination point for ATP.

Belongs to the ATPase alpha/beta chains family. F-type ATPases have 2 components, CF(1) - the catalytic core - and CF(0) - the membrane proton channel. CF(1) has five subunits: alpha(3), beta(3), gamma(1), delta(1), epsilon(1). CF(0) has three main subunits: a(1), b(2) and c(9-12). The alpha and beta chains form an alternating ring which encloses part of the gamma chain. CF(1) is attached to CF(0) by a central stalk formed by the gamma and epsilon chains, while a peripheral stalk is formed by the delta and b chains.

The protein resides in the cell membrane. It carries out the reaction ATP + H2O + 4 H(+)(in) = ADP + phosphate + 5 H(+)(out). Produces ATP from ADP in the presence of a proton gradient across the membrane. The catalytic sites are hosted primarily by the beta subunits. This Clostridium botulinum (strain Loch Maree / Type A3) protein is ATP synthase subunit beta.